The chain runs to 131 residues: D-ribose pyranase (131 aa).

His-20 functions as the Proton donor in the catalytic mechanism. Residues Asp-28, His-98, and 120 to 122 (YAN) each bind substrate.

It belongs to the RbsD / FucU family. RbsD subfamily. Homodecamer.

It localises to the cytoplasm. The catalysed reaction is beta-D-ribopyranose = beta-D-ribofuranose. It functions in the pathway carbohydrate metabolism; D-ribose degradation; D-ribose 5-phosphate from beta-D-ribopyranose: step 1/2. Its function is as follows. Catalyzes the interconversion of beta-pyran and beta-furan forms of D-ribose. In Enterococcus faecalis (strain ATCC 700802 / V583), this protein is D-ribose pyranase.